The following is a 477-amino-acid chain: Aspartyl/glutamyl-tRNA(Asn/Gln) amidotransferase subunit B (477 aa).

It belongs to the GatB/GatE family. GatB subfamily. As to quaternary structure, heterotrimer of A, B and C subunits.

It catalyses the reaction L-glutamyl-tRNA(Gln) + L-glutamine + ATP + H2O = L-glutaminyl-tRNA(Gln) + L-glutamate + ADP + phosphate + H(+). The enzyme catalyses L-aspartyl-tRNA(Asn) + L-glutamine + ATP + H2O = L-asparaginyl-tRNA(Asn) + L-glutamate + ADP + phosphate + 2 H(+). In terms of biological role, allows the formation of correctly charged Asn-tRNA(Asn) or Gln-tRNA(Gln) through the transamidation of misacylated Asp-tRNA(Asn) or Glu-tRNA(Gln) in organisms which lack either or both of asparaginyl-tRNA or glutaminyl-tRNA synthetases. The reaction takes place in the presence of glutamine and ATP through an activated phospho-Asp-tRNA(Asn) or phospho-Glu-tRNA(Gln). In Coxiella burnetii (strain CbuG_Q212) (Coxiella burnetii (strain Q212)), this protein is Aspartyl/glutamyl-tRNA(Asn/Gln) amidotransferase subunit B.